The sequence spans 147 residues: Large ribosomal subunit protein bL9 (147 aa).

This sequence belongs to the bacterial ribosomal protein bL9 family.

Functionally, binds to the 23S rRNA. This chain is Large ribosomal subunit protein bL9, found in Campylobacter hominis (strain ATCC BAA-381 / DSM 21671 / CCUG 45161 / LMG 19568 / NCTC 13146 / CH001A).